The chain runs to 70 residues: Bowman-Birk type proteinase inhibitor A7 (70 aa).

Disulfide bonds link C12/C31, C18/C29, C38/C45, and C42/C59.

This sequence belongs to the Bowman-Birk serine protease inhibitor family. In terms of tissue distribution, expressed in bulb (at protein level).

Its function is as follows. Serine protease inhibitor. Strongly inhibits trypsin (Ki = 7.1 nM) and almost completely inhibits elastase. Also inhibits chymotrypsin (Ki = 19 nM). Does not inhibit bacterial subtilisin. The sequence is that of Bowman-Birk type proteinase inhibitor A7 from Hyacinthus orientalis (Common hyacinth).